Here is a 525-residue protein sequence, read N- to C-terminus: uncharacterized protein (525 aa).

The next 2 helical transmembrane spans lie at 28-48 (FIDV…NLII) and 353-373 (GVNA…LFTP). Positions 146–394 (DIKIGKLKVG…ELKIASKMMF (249 aa)) constitute a Pterin-binding domain.

It localises to the cell membrane. Functionally, unknown. Does not possess dihydropteroate synthase (DHPS) activity since it does not catalyze the condensation of 6-hydroxymethyl-7,8-dihydropterin pyrophosphate (DHPP) and 4-aminobenzoate to form 7,8-dihydropteroate. This is an uncharacterized protein from Methanocaldococcus jannaschii (strain ATCC 43067 / DSM 2661 / JAL-1 / JCM 10045 / NBRC 100440) (Methanococcus jannaschii).